Consider the following 90-residue polypeptide: Probable Fe(2+)-trafficking protein (90 aa).

It belongs to the Fe(2+)-trafficking protein family.

Its function is as follows. Could be a mediator in iron transactions between iron acquisition and iron-requiring processes, such as synthesis and/or repair of Fe-S clusters in biosynthetic enzymes. The sequence is that of Probable Fe(2+)-trafficking protein from Koribacter versatilis (strain Ellin345).